A 395-amino-acid chain; its full sequence is ATP phosphoribosyltransferase regulatory subunit (395 aa).

The protein belongs to the class-II aminoacyl-tRNA synthetase family. HisZ subfamily. As to quaternary structure, heteromultimer composed of HisG and HisZ subunits.

The protein localises to the cytoplasm. It participates in amino-acid biosynthesis; L-histidine biosynthesis; L-histidine from 5-phospho-alpha-D-ribose 1-diphosphate: step 1/9. Required for the first step of histidine biosynthesis. May allow the feedback regulation of ATP phosphoribosyltransferase activity by histidine. The polypeptide is ATP phosphoribosyltransferase regulatory subunit (Pseudomonas putida (strain ATCC 700007 / DSM 6899 / JCM 31910 / BCRC 17059 / LMG 24140 / F1)).